A 179-amino-acid polypeptide reads, in one-letter code: Adenine phosphoribosyltransferase (179 aa).

It belongs to the purine/pyrimidine phosphoribosyltransferase family. Homodimer.

It is found in the cytoplasm. It carries out the reaction AMP + diphosphate = 5-phospho-alpha-D-ribose 1-diphosphate + adenine. It participates in purine metabolism; AMP biosynthesis via salvage pathway; AMP from adenine: step 1/1. Catalyzes a salvage reaction resulting in the formation of AMP, that is energically less costly than de novo synthesis. This is Adenine phosphoribosyltransferase from Nitrobacter hamburgensis (strain DSM 10229 / NCIMB 13809 / X14).